We begin with the raw amino-acid sequence, 170 residues long: Adenine phosphoribosyltransferase (170 aa).

Belongs to the purine/pyrimidine phosphoribosyltransferase family. In terms of assembly, homodimer.

It localises to the cytoplasm. It carries out the reaction AMP + diphosphate = 5-phospho-alpha-D-ribose 1-diphosphate + adenine. It participates in purine metabolism; AMP biosynthesis via salvage pathway; AMP from adenine: step 1/1. Functionally, catalyzes a salvage reaction resulting in the formation of AMP, that is energically less costly than de novo synthesis. This is Adenine phosphoribosyltransferase from Bacillus subtilis (strain 168).